The sequence spans 147 residues: D-aminoacyl-tRNA deacylase (147 aa).

A Gly-cisPro motif, important for rejection of L-amino acids motif is present at residues 136 to 137 (GP).

It belongs to the DTD family. Homodimer.

It is found in the cytoplasm. It carries out the reaction glycyl-tRNA(Ala) + H2O = tRNA(Ala) + glycine + H(+). It catalyses the reaction a D-aminoacyl-tRNA + H2O = a tRNA + a D-alpha-amino acid + H(+). An aminoacyl-tRNA editing enzyme that deacylates mischarged D-aminoacyl-tRNAs. Also deacylates mischarged glycyl-tRNA(Ala), protecting cells against glycine mischarging by AlaRS. Acts via tRNA-based rather than protein-based catalysis; rejects L-amino acids rather than detecting D-amino acids in the active site. By recycling D-aminoacyl-tRNA to D-amino acids and free tRNA molecules, this enzyme counteracts the toxicity associated with the formation of D-aminoacyl-tRNA entities in vivo and helps enforce protein L-homochirality. This is D-aminoacyl-tRNA deacylase from Streptococcus pneumoniae serotype 4 (strain ATCC BAA-334 / TIGR4).